We begin with the raw amino-acid sequence, 1404 residues long: DNA-directed RNA polymerase subunit beta' (1404 aa).

Zn(2+) contacts are provided by Cys70, Cys72, Cys85, and Cys88. Residues Asp460, Asp462, and Asp464 each coordinate Mg(2+). Positions 814, 889, 896, and 899 each coordinate Zn(2+).

The protein belongs to the RNA polymerase beta' chain family. The RNAP catalytic core consists of 2 alpha, 1 beta, 1 beta' and 1 omega subunit. When a sigma factor is associated with the core the holoenzyme is formed, which can initiate transcription. Requires Mg(2+) as cofactor. Zn(2+) serves as cofactor.

The enzyme catalyses RNA(n) + a ribonucleoside 5'-triphosphate = RNA(n+1) + diphosphate. Its function is as follows. DNA-dependent RNA polymerase catalyzes the transcription of DNA into RNA using the four ribonucleoside triphosphates as substrates. This chain is DNA-directed RNA polymerase subunit beta', found in Xanthomonas axonopodis pv. citri (strain 306).